We begin with the raw amino-acid sequence, 158 residues long: SsrA-binding protein (158 aa).

The protein belongs to the SmpB family.

The protein resides in the cytoplasm. Required for rescue of stalled ribosomes mediated by trans-translation. Binds to transfer-messenger RNA (tmRNA), required for stable association of tmRNA with ribosomes. tmRNA and SmpB together mimic tRNA shape, replacing the anticodon stem-loop with SmpB. tmRNA is encoded by the ssrA gene; the 2 termini fold to resemble tRNA(Ala) and it encodes a 'tag peptide', a short internal open reading frame. During trans-translation Ala-aminoacylated tmRNA acts like a tRNA, entering the A-site of stalled ribosomes, displacing the stalled mRNA. The ribosome then switches to translate the ORF on the tmRNA; the nascent peptide is terminated with the 'tag peptide' encoded by the tmRNA and targeted for degradation. The ribosome is freed to recommence translation, which seems to be the essential function of trans-translation. In Glaesserella parasuis serovar 5 (strain SH0165) (Haemophilus parasuis), this protein is SsrA-binding protein.